Reading from the N-terminus, the 254-residue chain is MSFPYFISPEQAMRERSELARKGIARGRSVIALAYADGVLFVAENPSRSLQKVSELYDRIGFAAVGRFNEFNNLRSGGIRFADTQGYAYSRRDVTGRQLANVYAQTLGTIFTEQAKPYEVELCVAEVAHHGETKAPELYRITYDGSIADEPHFVVMGGTTEPISTALNESYKENLSLADAVSIAVKALGAGVNGAEPRTLGPATLEVAVLDANRPRRAFRRITGSALEALLPEVDSSESSNEAEAGAEKGSGES.

A disordered region spans residues 232–254 (PEVDSSESSNEAEAGAEKGSGES).

This sequence belongs to the peptidase T1A family. As to quaternary structure, the 20S proteasome core is composed of 14 alpha and 14 beta subunits that assemble into four stacked heptameric rings, resulting in a barrel-shaped structure. The two inner rings, each composed of seven catalytic beta subunits, are sandwiched by two outer rings, each composed of seven alpha subunits. The catalytic chamber with the active sites is on the inside of the barrel. Has a gated structure, the ends of the cylinder being occluded by the N-termini of the alpha-subunits. Is capped by the proteasome-associated ATPase, ARC.

The protein localises to the cytoplasm. Its pathway is protein degradation; proteasomal Pup-dependent pathway. Its activity is regulated as follows. The formation of the proteasomal ATPase ARC-20S proteasome complex, likely via the docking of the C-termini of ARC into the intersubunit pockets in the alpha-rings, may trigger opening of the gate for substrate entry. Interconversion between the open-gate and close-gate conformations leads to a dynamic regulation of the 20S proteasome proteolysis activity. Functionally, component of the proteasome core, a large protease complex with broad specificity involved in protein degradation. This Mycolicibacterium vanbaalenii (strain DSM 7251 / JCM 13017 / BCRC 16820 / KCTC 9966 / NRRL B-24157 / PYR-1) (Mycobacterium vanbaalenii) protein is Proteasome subunit alpha.